We begin with the raw amino-acid sequence, 336 residues long: Telomere-binding protein cav (336 aa).

The tract at residues 107-328 (RKKMVQPYPE…TITFQNSESE (222 aa)) is required for binding to Su(var)205. Disordered stretches follow at residues 137-158 (RLDR…SPAR) and 199-218 (SSDL…SEFQ). 2 consecutive short sequence motifs (su(var)205-binding Pro-containing repeat) follow at residues 225 to 231 (PETAINE) and 289 to 295 (PETEMNE). Residues 308–327 (MSIGPSIDSEGTITFQNSES) show a composition bias toward polar residues. Residues 308-336 (MSIGPSIDSEGTITFQNSESEPIDVDSIA) are disordered.

As to quaternary structure, interacts (via C-terminus) with Su(var)205 dimer (via hinge and chromoshadow domain) and with moi to form the terminin, telomere-capping, complex. Interacts with HP6, which is also part of the terminin complex.

The protein localises to the nucleus. It localises to the chromosome. The protein resides in the telomere. Functionally, binds to chromosome ends in a sequence-dependent manner and is required for telomere capping. The chain is Telomere-binding protein cav from Drosophila sechellia (Fruit fly).